The chain runs to 1322 residues: WD repeat-containing protein 17 (1322 aa).

WD repeat units lie at residues 81 to 121, 123 to 164, 171 to 211, 221 to 261, and 266 to 307; these read EHKK…VIAK, DSTK…SGVI, SFLS…QKHV, DEED…CITT, and SAAA…PIDN. Residues 328-352 are disordered; it reads KFSVQSPTKNHYTSSTSEAVPPPTL. Polar residues predominate over residues 330 to 345; it reads SVQSPTKNHYTSSTSE. WD repeat units follow at residues 391–431, 434–474, 478–518, 519–559, 564–604, 607–647, and 650–690; these read GHVE…AVYT, GNEG…IIQR, HGTN…LHKY, KHPA…DQPL, GHTA…CINI, GHTA…CVDT, and DHGA…TPVQ.

This Homo sapiens (Human) protein is WD repeat-containing protein 17 (WDR17).